The following is a 1312-amino-acid chain: Angiotensin-converting enzyme (1312 aa).

Positions 1-34 (MGAASGQRGRWPLSPPLLMLSLLVLLLQPSPAPA) are cleaved as a signal peptide. Over 35–1264 (LDPGLQPGNF…LEPQQARVGQ (1230 aa)) the chain is Extracellular. 2 consecutive Peptidase M2 domains span residues 45–629 (SPDE…LGWP) and 648–1227 (ETDE…LGWP). Residues Asn-59, Asn-79, Asn-116, Asn-151, and Asn-165 are each glycosylated (N-linked (GlcNAc...) asparagine). Cysteines 162 and 170 form a disulfide. Position 236 (Tyr-236) interacts with chloride. Asn-323 is a glycosylation site (N-linked (GlcNAc...) asparagine). A disulfide bridge links Cys-364 with Cys-382. His-395 lines the Zn(2+) pocket. Glu-396 functions as the Proton acceptor 1 in the catalytic mechanism. 2 residues coordinate Zn(2+): His-399 and Glu-423. A glycan (N-linked (GlcNAc...) asparagine) is linked at Asn-514. The Proton donor 1 role is filled by His-525. Arg-534 serves as a coordination point for chloride. Cys-550 and Cys-562 form a disulfide bridge. Asn-682 carries N-linked (GlcNAc...) asparagine glycosylation. N-linked (GlcNAc...) (complex) asparagine glycans are attached at residues Asn-700 and Asn-719. A disulfide bridge links Cys-762 with Cys-768. Asn-765 carries N-linked (GlcNAc...) asparagine glycosylation. Chloride contacts are provided by Arg-796 and Tyr-834. An N-linked (GlcNAc...) asparagine glycan is attached at Asn-947. A disulfide bridge links Cys-962 with Cys-980. A Zn(2+)-binding site is contributed by His-993. Glu-994 (proton acceptor 2) is an active-site residue. His-997 and Glu-1021 together coordinate Zn(2+). 2 residues coordinate chloride: Trp-1095 and Arg-1099. Residue His-1123 is the Proton donor 2 of the active site. A chloride-binding site is contributed by Arg-1132. Residues Cys-1148 and Cys-1160 are joined by a disulfide bond. An N-linked (GlcNAc...) asparagine glycan is attached at Asn-1196. The tract at residues 1220–1261 (HGETLGWPEYNWAPNTARAEGSTAESNRVNFLGLYLEPQQAR) is juxtamembrane stalk. Residues 1265–1281 (WVLLFLGVALLVATVGL) form a helical membrane-spanning segment. At 1282–1312 (AHRLYNIRNHHSLRRPHRGPQFGSEVELRHS) the chain is on the cytoplasmic side. Ser-1305 is modified (phosphoserine).

Belongs to the peptidase M2 family. As to quaternary structure, monomer and homodimer; homodimerizes following binding to an inhibitor. Interacts with calmodulin (CALM1, CALM2 or CALM3); interaction takes place in the cytoplasmic region and regulates phosphorylation and proteolytic cleavage. Zn(2+) serves as cofactor. Requires chloride as cofactor. Produced following proteolytic cleavage by secretase enzymes that cleave the transmembrane form in the juxtamembrane stalk region upstream of the transmembrane region. Cleavage can take place at different sites of the juxtamembrane stalk region. Post-translationally, phosphorylated by CK2 on Ser-1305; which allows membrane retention. Phosphorylated on tyrosine residues on its extracellular part, promoting cleavage by secretase enzymes and formation of the soluble form (Angiotensin-converting enzyme, soluble form). As to expression, highly expressed in kidney and lung; not expressed in the liver. In the brain, expressed in the cerebral cortex, hippocampus, cerebellum and basal ganglia/brainstem. Highly expressed in dopamine receptor DRD1-expressing neurons in the dorsal striatum and the nucleus accumbens of the brain. Specifically expressed in spermatocytes, adult testis.

It localises to the cell membrane. It is found in the cytoplasm. The protein localises to the secreted. It carries out the reaction Release of a C-terminal dipeptide, oligopeptide-|-Xaa-Yaa, when Xaa is not Pro, and Yaa is neither Asp nor Glu. Thus, conversion of angiotensin I to angiotensin II, with increase in vasoconstrictor activity, but no action on angiotensin II.. The catalysed reaction is angiotensin I + H2O = L-histidyl-L-leucine + angiotensin II. It catalyses the reaction bradykinin + H2O = L-Phe-L-Arg + bradykinin(1-7). The enzyme catalyses substance P + H2O = substance P(1-9) + L-Leu-L-Met-NH2. It carries out the reaction substance P + H2O = substance P(1-8) + Gly-L-Leu-L-Met-NH2. The catalysed reaction is substance P + H2O = L-Phe-L-Phe-Gly-L-Leu-L-Met-NH2 + substance P(1-6). It catalyses the reaction neurotensin + H2O = neurotensin(1-11) + L-isoleucyl-L-leucine. The enzyme catalyses goralatide + H2O = N-acetyl-L-seryl-L-aspartate + L-lysyl-L-proline. It carries out the reaction Met-enkephalin + H2O = L-phenylalanyl-L-methionine + L-tyrosylglycylglycine. The catalysed reaction is Leu-enkephalin + H2O = L-tyrosylglycylglycine + L-phenylalanyl-L-leucine. It catalyses the reaction Met-enkephalin-Arg-Phe + H2O = L-arginyl-L-phenylalanine + Met-enkephalin. With respect to regulation, the dipeptidyl carboxypeptidase activity is specifically inhibited by lisinopril, captopril and enalaprilat. The N-terminal catalytic domain, but not the C-terminal catalytic domain, is specifically inhibited by the phosphinic peptide RXP 407. Its activity is regulated as follows. The putative GPIase activity is nearly insensitive to captopril. Its function is as follows. Dipeptidyl carboxypeptidase that removes dipeptides from the C-terminus of a variety of circulating hormones, such as angiotensin I, bradykinin or enkephalins, thereby playing a key role in the regulation of blood pressure, electrolyte homeostasis or synaptic plasticity. Composed of two similar catalytic domains, each possessing a functional active site, with different selectivity for substrates. Plays a major role in the angiotensin-renin system that regulates blood pressure and sodium retention by the kidney by converting angiotensin I to angiotensin II, resulting in an increase of the vasoconstrictor activity of angiotensin. Also able to inactivate bradykinin, a potent vasodilator, and therefore enhance the blood pressure response. Acts as a regulator of synaptic transmission by mediating cleavage of neuropeptide hormones, such as substance P, neurotensin or enkephalins. Catalyzes degradation of different enkephalin neuropeptides (Met-enkephalin, Leu-enkephalin, Met-enkephalin-Arg-Phe and possibly Met-enkephalin-Arg-Gly-Leu). Acts as a regulator of synaptic plasticity in the nucleus accumbens of the brain by mediating cleavage of Met-enkephalin-Arg-Phe, a strong ligand of Mu-type opioid receptor OPRM1, into Met-enkephalin. Met-enkephalin-Arg-Phe cleavage by ACE decreases activation of OPRM1, leading to long-term synaptic potentiation of glutamate release. Also acts as a regulator of hematopoietic stem cell differentiation by mediating degradation of hemoregulatory peptide N-acetyl-SDKP (AcSDKP). Acts as a regulator of cannabinoid signaling pathway by mediating degradation of hemopressin, an antagonist peptide of the cannabinoid receptor CNR1. Involved in amyloid-beta metabolism by catalyzing degradation of Amyloid-beta protein 40 and Amyloid-beta protein 42 peptides, thereby preventing plaque formation. Catalyzes cleavage of cholecystokinin (maturation of Cholecystokinin-8 and Cholecystokinin-5) and Gonadoliberin-1 (both maturation and degradation) hormones. Degradation of hemoregulatory peptide N-acetyl-SDKP (AcSDKP) and amyloid-beta proteins is mediated by the N-terminal catalytic domain, while angiotensin I and cholecystokinin cleavage is mediated by the C-terminal catalytic region. In terms of biological role, soluble form that is released in blood plasma and other body fluids following proteolytic cleavage in the juxtamembrane stalk region. Isoform produced by alternative promoter usage that is specifically expressed in spermatocytes and adult testis, and which is required for male fertility. In contrast to somatic isoforms, only contains one catalytic domain. Acts as a dipeptidyl carboxypeptidase that removes dipeptides from the C-terminus of substrates. The identity of substrates that are needed for male fertility is unknown. Isoform Testis-specific and isoform Somatic have distinct activities and cannot completely compensate for the loss of the other when expressed in somatic tissues or testis. May also have a glycosidase activity which releases GPI-anchored proteins from the membrane by cleaving the mannose linkage in the GPI moiety. The GPIase activity was reported to be essential for the egg-binding ability of the sperm. This activity is however unclear and has been challenged by other groups, suggesting that it may be indirect. The sequence is that of Angiotensin-converting enzyme from Mus musculus (Mouse).